The following is a 288-amino-acid chain: Sulfur carrier protein FdhD (288 aa).

C122 serves as the catalytic Cysteine persulfide intermediate. Residue 268–273 coordinates Mo-bis(molybdopterin guanine dinucleotide); it reads FVRGER.

This sequence belongs to the FdhD family.

The protein resides in the cytoplasm. Required for formate dehydrogenase (FDH) activity. Acts as a sulfur carrier protein that transfers sulfur from IscS to the molybdenum cofactor prior to its insertion into FDH. This chain is Sulfur carrier protein FdhD, found in Anaeromyxobacter dehalogenans (strain 2CP-C).